The primary structure comprises 105 residues: Small ribosomal subunit protein uS10 (105 aa).

This sequence belongs to the universal ribosomal protein uS10 family. Part of the 30S ribosomal subunit.

Functionally, involved in the binding of tRNA to the ribosomes. The sequence is that of Small ribosomal subunit protein uS10 from Solidesulfovibrio magneticus (strain ATCC 700980 / DSM 13731 / RS-1) (Desulfovibrio magneticus).